The primary structure comprises 260 residues: Small ribosomal subunit protein eS1 (260 aa).

At Ala-2 the chain carries N-acetylalanine; partial.

This sequence belongs to the eukaryotic ribosomal protein eS1 family. Component of the small ribosomal subunit. Mature ribosomes consist of a small (40S) and a large (60S) subunit. The 40S subunit contains about 33 different proteins and 1 molecule of RNA (18S). The 60S subunit contains about 49 different proteins and 3 molecules of RNA (25S, 5.8S and 5S).

It is found in the cytoplasm. In Mycosarcoma maydis (Corn smut fungus), this protein is Small ribosomal subunit protein eS1.